A 758-amino-acid polypeptide reads, in one-letter code: Dachshund homolog 1 (758 aa).

Disordered stretches follow at residues 1-105 (MAVP…SNCN) and 134-185 (INAS…TPQN). The segment covering 20–53 (ISTSASSSGTTTSTSSATSSPAPSIGPPASSGPT) has biased composition (low complexity). Gly residues predominate over residues 73–102 (TGGGGGGGGSGGGGGSSGNGGGGGGGGGGS). The span at 140–163 (SSSSSSSSSSSSSSSSSSSSSSSS) shows a compositional bias: low complexity. Positions 174–185 (STPSPVENTPQN) are enriched in polar residues. Positions 189–275 (KMVDLRGAKV…LISRKDFETL (87 aa)) are DACHbox-N. The interaction with SIX6 and HDAC3 stretch occupies residues 189–384 (KMVDLRGAKV…VGSSDGSWDK (196 aa)). Disordered regions lie at residues 280–302 (TNAS…PENS), 358–414 (SNNQ…PLSH), 474–532 (SPPS…RIPV), and 544–564 (MGLS…GHDM). 3 stretches are compositionally biased toward polar residues: residues 292-301 (RTQSVTSPEN), 358-380 (SNNQ…SSDG), and 387-399 (LPSS…QASI). The residue at position 491 (S491) is a Phosphoserine. Residues 506-524 (SHPSSHRSSSVSSSPARTE) show a composition bias toward low complexity. Residues 555 to 564 (KEGDLAGHDM) show a composition bias toward basic and acidic residues. The interval 616–696 (SSIETLLTNI…KAKRKLQEAL (81 aa)) is DACHbox-C. The interaction with SIN3A stretch occupies residues 627–706 (GLLKVAIDNA…EFETKRREQA (80 aa)). Residues 630–718 (KVAIDNARAQ…TLKQAASTDS (89 aa)) adopt a coiled-coil conformation.

Belongs to the DACH/dachshund family. As to quaternary structure, interacts with SIX1, SIX6 and EYA3. Interacts with NCOR1 and HDAC3 through its N-terminus. Interacts with SIN3A through its C-terminus. Interacts with SMAD3 and SMAD4. In terms of tissue distribution, widely expressed. Isoform 2 is found in brain, heart, kidney, liver, leukocytes and spleen. Isoform 3 is found in liver and heart. Isoform 4 is found in spleen.

It localises to the nucleus. Functionally, transcription factor that is involved in regulation of organogenesis. Seems to be a regulator of SIX1, SIX6 and probably SIX5. Corepression of precursor cell proliferation in myoblasts by SIX1 is switched to coactivation through recruitment of EYA3 to the SIX1-DACH1 complex. Transcriptional activation also seems to involve association of CREBBP. Seems to act as a corepressor of SIX6 in regulating proliferation by directly repressing cyclin-dependent kinase inhibitors, including the p27Kip1 promoter. Inhibits TGF-beta signaling through interaction with SMAD4 and NCOR1. Binds to chromatin DNA via its DACHbox-N domain. The chain is Dachshund homolog 1 (DACH1) from Homo sapiens (Human).